We begin with the raw amino-acid sequence, 332 residues long: Methionine import ATP-binding protein MetN (332 aa).

The 238-residue stretch at 2–239 folds into the ABC transporter domain; the sequence is ITFQDVSKTY…PASDTARRFV (238 aa). An ATP-binding site is contributed by 36–43; sequence GASGAGKS.

Belongs to the ABC transporter superfamily. Methionine importer (TC 3.A.1.24) family. As to quaternary structure, the complex is composed of two ATP-binding proteins (MetN), two transmembrane proteins (MetI) and a solute-binding protein (MetQ).

It localises to the cell inner membrane. It carries out the reaction L-methionine(out) + ATP + H2O = L-methionine(in) + ADP + phosphate + H(+). The enzyme catalyses D-methionine(out) + ATP + H2O = D-methionine(in) + ADP + phosphate + H(+). In terms of biological role, part of the ABC transporter complex MetNIQ involved in methionine import. Responsible for energy coupling to the transport system. This chain is Methionine import ATP-binding protein MetN, found in Caulobacter vibrioides (strain ATCC 19089 / CIP 103742 / CB 15) (Caulobacter crescentus).